The sequence spans 126 residues: MVYDFKAEIVKAKNSGSAKSGSHHWLLQRVTGIILALCSVWLIYFTLTNKNNDINIIMLWELKKPFNVVALLITVVISLYHAMLGMRVVIEDYISYHKLRNTLIIIVQLFCIVTIVAFVVALFYKG.

Residues 1-24 lie on the Cytoplasmic side of the membrane; sequence MVYDFKAEIVKAKNSGSAKSGSHH. A helical membrane pass occupies residues 25 to 45; that stretch reads WLLQRVTGIILALCSVWLIYF. Residues 46–68 are Periplasmic-facing; that stretch reads TLTNKNNDINIIMLWELKKPFNV. Residues 69 to 90 traverse the membrane as a helical segment; it reads VALLITVVISLYHAMLGMRVVI. Histidine 81 contributes to the heme binding site. Residues 91-100 lie on the Cytoplasmic side of the membrane; sequence EDYISYHKLR. Tyrosine 93 is an a ubiquinone binding site. The helical transmembrane segment at 101–124 threads the bilayer; sequence NTLIIIVQLFCIVTIVAFVVALFY.

In terms of assembly, part of an enzyme complex containing four subunits: a flavoprotein, an iron-sulfur protein, plus two membrane-anchoring proteins, SdhC and SdhD. Heme serves as cofactor.

It localises to the cell inner membrane. It participates in carbohydrate metabolism; tricarboxylic acid cycle. Functionally, membrane-anchoring subunit of succinate dehydrogenase (SDH). The protein is Succinate dehydrogenase hydrophobic membrane anchor subunit (sdhD) of Rickettsia conorii (strain ATCC VR-613 / Malish 7).